Consider the following 606-residue polypeptide: Elongation factor 4 (606 aa).

The tr-type G domain maps to 10-192 (ENIRNFSIIA…AIVQQLPAPK (183 aa)). GTP is bound by residues 22–27 (DHGKST) and 139–142 (NKID).

The protein belongs to the TRAFAC class translation factor GTPase superfamily. Classic translation factor GTPase family. LepA subfamily.

The protein localises to the cell membrane. It carries out the reaction GTP + H2O = GDP + phosphate + H(+). Required for accurate and efficient protein synthesis under certain stress conditions. May act as a fidelity factor of the translation reaction, by catalyzing a one-codon backward translocation of tRNAs on improperly translocated ribosomes. Back-translocation proceeds from a post-translocation (POST) complex to a pre-translocation (PRE) complex, thus giving elongation factor G a second chance to translocate the tRNAs correctly. Binds to ribosomes in a GTP-dependent manner. The protein is Elongation factor 4 of Lawsonia intracellularis (strain PHE/MN1-00).